The sequence spans 497 residues: MPMKFEFSFSKSHRPAGGAAVLLQVAGAKEAAGAAVVDPEGVLAKAAKIGKFTGKALSTLDVIAPHGSPADRIVLLGLGDAGGVGDHDWLKAGGAAAAKLRSAEKITVFLDAPGLEVTGKAAADFALGMEMNAYGFESYKTRKSDDEPKAAQKPVKVTIVTGTVIAAKKAFMTAQAVGEGVFLARDLVNEPANVLGPVEFAARAKELERLGVDVEILTEREMKKLGMGALLGVAQGSSRPPRLVVMQWKGGKAKEKPVAFIGKGVVFDTGGISIKPASGMEEMKGDMGGAAAVTGLMHVLAARKAAVNAIGIIGLVENMPDGSAQRPGDIVTSMSGQTIEVINTDAEGRLVLGDALWYCNDRFKPQLMIDLATLTGAIMVALSNHYAGLFSNDDRLAEQLLAAGLATQERLWRMPLGKEYDKMIDSKFADMKNTGGRHGGSVTAAQFLKRFVKDTPWAHLDIAGTAMGSPTDEINQSWGSGFGVRLLDQLVRANYES.

Positions 263 and 268 each coordinate Mn(2+). The active site involves lysine 275. The Mn(2+) site is built by aspartate 286, aspartate 345, and glutamate 347. Arginine 349 is an active-site residue.

This sequence belongs to the peptidase M17 family. It depends on Mn(2+) as a cofactor.

The protein localises to the cytoplasm. The enzyme catalyses Release of an N-terminal amino acid, Xaa-|-Yaa-, in which Xaa is preferably Leu, but may be other amino acids including Pro although not Arg or Lys, and Yaa may be Pro. Amino acid amides and methyl esters are also readily hydrolyzed, but rates on arylamides are exceedingly low.. The catalysed reaction is Release of an N-terminal amino acid, preferentially leucine, but not glutamic or aspartic acids.. Its function is as follows. Presumably involved in the processing and regular turnover of intracellular proteins. Catalyzes the removal of unsubstituted N-terminal amino acids from various peptides. In Rhizobium meliloti (strain 1021) (Ensifer meliloti), this protein is Probable cytosol aminopeptidase.